Consider the following 169-residue polypeptide: Phosphopantetheine adenylyltransferase (169 aa).

T14 is a binding site for substrate. ATP-binding positions include 14–15 (TF) and H22. Substrate is bound by residues K46, L78, and R92. ATP contacts are provided by residues 93-95 (GLR), E103, and 128-134 (HSFISSS).

This sequence belongs to the bacterial CoaD family. As to quaternary structure, homohexamer. Mg(2+) is required as a cofactor.

The protein resides in the cytoplasm. It carries out the reaction (R)-4'-phosphopantetheine + ATP + H(+) = 3'-dephospho-CoA + diphosphate. It functions in the pathway cofactor biosynthesis; coenzyme A biosynthesis; CoA from (R)-pantothenate: step 4/5. Reversibly transfers an adenylyl group from ATP to 4'-phosphopantetheine, yielding dephospho-CoA (dPCoA) and pyrophosphate. The chain is Phosphopantetheine adenylyltransferase from Stenotrophomonas maltophilia (strain R551-3).